Here is a 393-residue protein sequence, read N- to C-terminus: Pyrimidine monooxygenase RutA (393 aa).

FMN contacts are provided by residues 79–80 (IK), asparagine 145, glutamate 154, 170–171 (RY), and serine 220.

The protein belongs to the NtaA/SnaA/DszA monooxygenase family. RutA subfamily.

The enzyme catalyses uracil + FMNH2 + NADH + O2 = (Z)-3-ureidoacrylate + FMN + NAD(+) + H2O + H(+). It catalyses the reaction thymine + FMNH2 + NADH + O2 = (Z)-2-methylureidoacrylate + FMN + NAD(+) + H2O + H(+). Catalyzes the pyrimidine ring opening between N-3 and C-4 by an unusual flavin hydroperoxide-catalyzed mechanism, adding oxygen atoms in the process to yield ureidoacrylate peracid, that immediately reacts with FMN forming ureidoacrylate and FMN-N(5)-oxide. The FMN-N(5)-oxide reacts spontaneously with NADH to produce FMN. Requires the flavin reductase RutF to regenerate FMN in vivo. The sequence is that of Pyrimidine monooxygenase RutA from Escherichia coli O139:H28 (strain E24377A / ETEC).